Here is a 356-residue protein sequence, read N- to C-terminus: UDP-N-acetylenolpyruvoylglucosamine reductase (356 aa).

The 209-residue stretch at 19–227 folds into the FAD-binding PCMH-type domain; it reads LGGPAARFCS…RDAVLSLRRS (209 aa). Arg-167 is a catalytic residue. The active-site Proton donor is Ser-244. Glu-348 is an active-site residue.

This sequence belongs to the MurB family. Requires FAD as cofactor.

It localises to the cytoplasm. The catalysed reaction is UDP-N-acetyl-alpha-D-muramate + NADP(+) = UDP-N-acetyl-3-O-(1-carboxyvinyl)-alpha-D-glucosamine + NADPH + H(+). Its pathway is cell wall biogenesis; peptidoglycan biosynthesis. Functionally, cell wall formation. The sequence is that of UDP-N-acetylenolpyruvoylglucosamine reductase from Thermobifida fusca (strain YX).